Consider the following 502-residue polypeptide: Beta-amyrin 28-monooxygenase CYP716A379 (502 aa).

The chain crosses the membrane as a helical; Signal-anchor for type II membrane protein span at residues 3–23 (LITLLSALLVLAIVSLSTFFV). N-linked (GlcNAc...) asparagine glycans are attached at residues N88 and N181. C444 contributes to the heme binding site.

Belongs to the cytochrome P450 family. Heme is required as a cofactor. In terms of tissue distribution, mainly expressed in flowers and flower buds, to a lesser extent in young leaves and, at low levels, in old leaves, stems and roots.

It is found in the membrane. It catalyses the reaction beta-amyrin + 3 reduced [NADPH--hemoprotein reductase] + 3 O2 = oleanolate + 3 oxidized [NADPH--hemoprotein reductase] + 4 H2O + 4 H(+). The protein operates within secondary metabolite biosynthesis; terpenoid biosynthesis. Functionally, component of the oleanane-type triterpene saponins (e.g. saponarioside A and saponarioside B) biosynthetic pathway, leading to the production of natural products with detergent properties used as traditional sources of soap. An oxidoreductase that facilitates the oxidation of the methyl group to a carboxyl group at the C-28 position of beta-amyrin, resulting in the formation of oleanolic acid. Catalyzes also the subsequent oxidation of the methyl group to a&lt; carboxyl group at the C-16 alpha position of oleanolic acid, resulting in the formation of echinocystic acid. In Saponaria officinalis (Common soapwort), this protein is Beta-amyrin 28-monooxygenase CYP716A379.